The chain runs to 808 residues: Beta-catenin/armadillo-related protein 1 (808 aa).

The interval 1-85 is involved in transcriptional activation; the sequence is MDLDPNLVIN…SSHLSGMSSM (85 aa). ARM repeat units lie at residues 118–160, 165–209, and 369–408; these read RAIP…NETK, CVIF…RAIS, and SDVP…NLVA. An involved in transcriptional activation region spans residues 541 to 808; the sequence is NVQDVIEGVR…DQYPYRQGRF (268 aa). A disordered region spans residues 702-808; it reads TYEGAGEQWS…DQYPYRQGRF (107 aa). The segment covering 723 to 736 has biased composition (polar residues); sequence YCNSSGRDSSKTYN. Low complexity predominate over residues 737-750; it reads SPMYHSPPSMYPEY. Polar residues predominate over residues 786–798; sequence NIPSNQGPSSHLS.

Belongs to the beta-catenin family. Interacts with apr-1, axl-1, daf-16, lin-23, and pop-1 (via acidic region in N-terminus 1-44). Interacts (via ARM repeats) with pry-1.

The protein localises to the cytoplasm. It is found in the nucleus. It localises to the membrane. The protein resides in the cell junction. In terms of biological role, participates in the Wnt signaling pathway which affects cell fate and may regulate the stem cell divisions of seam cells during larval development. Functions as a transcriptional activator but is dependent on the interaction with pop-1. Involved in maintaining lin-39 Hox expression and regulating glr-1 abundance at the synapses. Required for mab-5 expression during Q neuroblast migration and for oxidative stress-induced daf-16 signaling. Has roles in egg laying, vulva precursor cell fate determination, Q neuroblast migration, posterior ectodermal cell P12 specification, movement, body length, male tail development and dauer induction. Functionally redundant to wrm-1 and hmp-2. The polypeptide is Beta-catenin/armadillo-related protein 1 (bar-1) (Caenorhabditis briggsae).